The chain runs to 34 residues: Photosystem II reaction center protein M (34 aa).

A helical membrane pass occupies residues 5–25 (ILAFIATALFILIPTAFLLIL).

It belongs to the PsbM family. PSII is composed of 1 copy each of membrane proteins PsbA, PsbB, PsbC, PsbD, PsbE, PsbF, PsbH, PsbI, PsbJ, PsbK, PsbL, PsbM, PsbT, PsbX, PsbY, PsbZ, Psb30/Ycf12, at least 3 peripheral proteins of the oxygen-evolving complex and a large number of cofactors. It forms dimeric complexes.

Its subcellular location is the plastid. It localises to the chloroplast thylakoid membrane. One of the components of the core complex of photosystem II (PSII). PSII is a light-driven water:plastoquinone oxidoreductase that uses light energy to abstract electrons from H(2)O, generating O(2) and a proton gradient subsequently used for ATP formation. It consists of a core antenna complex that captures photons, and an electron transfer chain that converts photonic excitation into a charge separation. This subunit is found at the monomer-monomer interface. In Anthoceros angustus (Hornwort), this protein is Photosystem II reaction center protein M.